The chain runs to 118 residues: MFRYKQVMVIRKDLKLSKGKMAVQVAHGAVTAALKVQKEKPEWFKAWFHEGQKKVVVKAENERELFELKAHAEKLGIPTALIRDAGLTEIPPGTITCLAVGPAPEELVDKVTGHLKLV.

Belongs to the PTH2 family.

The protein localises to the cytoplasm. It catalyses the reaction an N-acyl-L-alpha-aminoacyl-tRNA + H2O = an N-acyl-L-amino acid + a tRNA + H(+). Functionally, the natural substrate for this enzyme may be peptidyl-tRNAs which drop off the ribosome during protein synthesis. The sequence is that of Peptidyl-tRNA hydrolase from Thermococcus onnurineus (strain NA1).